The sequence spans 393 residues: Interferon regulatory factor 9 (393 aa).

The IRF tryptophan pentad repeat DNA-binding region spans 9 to 116 (TRKLRNWVVE…EPYKVYQLLP (108 aa)). 2 disordered regions span residues 120–151 (VSGQPGTQKVPSKRQHSSVSSERKEEEDAMQN) and 163–202 (LNNEEEGASGGAVHSDIGSSSSSSSPEPQEVTDTTEAPFQ). Ser-139 is subject to Phosphoserine.

This sequence belongs to the IRF family. In terms of assembly, interacts with STAT2 in the cytoplasm. Forms the interferon-stimulated gene factor 3 complex (ISGF3) with the heterodimer STAT1:STAT2; upon stimulation. As to quaternary structure, (Microbial infection) Interacts with measles virus V protein; this interaction prevents the binding of IRF9 to STAT2 and thereby the type I interferon signaling pathway. Post-translationally, (Microbial infection) Ubiquitinated by Herpes simplex virus 2 E3 ubiquitin ligase ICP22.

It localises to the cytoplasm. It is found in the nucleus. Transcription factor that plays an essential role in anti-viral immunity. It mediates signaling by type I IFNs (IFN-alpha and IFN-beta). Following type I IFN binding to cell surface receptors, Jak kinases (TYK2 and JAK1) are activated, leading to tyrosine phosphorylation of STAT1 and STAT2. IRF9/ISGF3G associates with the phosphorylated STAT1:STAT2 dimer to form a complex termed ISGF3 transcription factor, that enters the nucleus. ISGF3 binds to the IFN stimulated response element (ISRE) to activate the transcription of interferon stimulated genes, which drive the cell in an antiviral state. The chain is Interferon regulatory factor 9 (IRF9) from Homo sapiens (Human).